A 211-amino-acid polypeptide reads, in one-letter code: Large ribosomal subunit protein uL4 (211 aa).

The tract at residues N42–R73 is disordered.

Belongs to the universal ribosomal protein uL4 family. Part of the 50S ribosomal subunit.

Functionally, one of the primary rRNA binding proteins, this protein initially binds near the 5'-end of the 23S rRNA. It is important during the early stages of 50S assembly. It makes multiple contacts with different domains of the 23S rRNA in the assembled 50S subunit and ribosome. Its function is as follows. Forms part of the polypeptide exit tunnel. This Leptospira biflexa serovar Patoc (strain Patoc 1 / Ames) protein is Large ribosomal subunit protein uL4.